Consider the following 427-residue polypeptide: Putative F-box protein At4g10740 (427 aa).

Positions 2-47 (RTTMSNLPKELVEDIVSRVPLHCLRAMRLTCKNWNALLESQSFKKM) constitute an F-box domain.

This is Putative F-box protein At4g10740 from Arabidopsis thaliana (Mouse-ear cress).